Consider the following 346-residue polypeptide: tRNA N6-adenosine threonylcarbamoyltransferase (346 aa).

Fe cation-binding residues include His111 and His115. Residues 134–138 (LVSGG), Asp167, Gly180, Asp184, and Asn279 each bind substrate. Residue Asp307 coordinates Fe cation.

It belongs to the KAE1 / TsaD family. Fe(2+) serves as cofactor.

The protein localises to the cytoplasm. It carries out the reaction L-threonylcarbamoyladenylate + adenosine(37) in tRNA = N(6)-L-threonylcarbamoyladenosine(37) in tRNA + AMP + H(+). In terms of biological role, required for the formation of a threonylcarbamoyl group on adenosine at position 37 (t(6)A37) in tRNAs that read codons beginning with adenine. Is involved in the transfer of the threonylcarbamoyl moiety of threonylcarbamoyl-AMP (TC-AMP) to the N6 group of A37, together with TsaE and TsaB. TsaD likely plays a direct catalytic role in this reaction. This chain is tRNA N6-adenosine threonylcarbamoyltransferase, found in Gloeothece citriformis (strain PCC 7424) (Cyanothece sp. (strain PCC 7424)).